Here is a 221-residue protein sequence, read N- to C-terminus: Probable septum site-determining protein MinC (221 aa).

Belongs to the MinC family. As to quaternary structure, interacts with MinD and FtsZ.

Its function is as follows. Cell division inhibitor that blocks the formation of polar Z ring septums. Rapidly oscillates between the poles of the cell to destabilize FtsZ filaments that have formed before they mature into polar Z rings. Prevents FtsZ polymerization. This chain is Probable septum site-determining protein MinC, found in Prochlorococcus marinus (strain SARG / CCMP1375 / SS120).